The primary structure comprises 185 residues: Peptide methionine sulfoxide reductase MsrA (185 aa).

Cysteine 12 is an active-site residue.

This sequence belongs to the MsrA Met sulfoxide reductase family.

The enzyme catalyses L-methionyl-[protein] + [thioredoxin]-disulfide + H2O = L-methionyl-(S)-S-oxide-[protein] + [thioredoxin]-dithiol. It carries out the reaction [thioredoxin]-disulfide + L-methionine + H2O = L-methionine (S)-S-oxide + [thioredoxin]-dithiol. In terms of biological role, has an important function as a repair enzyme for proteins that have been inactivated by oxidation. Catalyzes the reversible oxidation-reduction of methionine sulfoxide in proteins to methionine. The chain is Peptide methionine sulfoxide reductase MsrA from Granulibacter bethesdensis (strain ATCC BAA-1260 / CGDNIH1).